The primary structure comprises 319 residues: Acetyl-coenzyme A carboxylase carboxyl transferase subunit alpha (319 aa).

Positions 35 to 296 (NLDEEVQRLR…KAQLLADLSD (262 aa)) constitute a CoA carboxyltransferase C-terminal domain.

Belongs to the AccA family. As to quaternary structure, acetyl-CoA carboxylase is a heterohexamer composed of biotin carboxyl carrier protein (AccB), biotin carboxylase (AccC) and two subunits each of ACCase subunit alpha (AccA) and ACCase subunit beta (AccD).

The protein resides in the cytoplasm. The catalysed reaction is N(6)-carboxybiotinyl-L-lysyl-[protein] + acetyl-CoA = N(6)-biotinyl-L-lysyl-[protein] + malonyl-CoA. The protein operates within lipid metabolism; malonyl-CoA biosynthesis; malonyl-CoA from acetyl-CoA: step 1/1. Functionally, component of the acetyl coenzyme A carboxylase (ACC) complex. First, biotin carboxylase catalyzes the carboxylation of biotin on its carrier protein (BCCP) and then the CO(2) group is transferred by the carboxyltransferase to acetyl-CoA to form malonyl-CoA. This is Acetyl-coenzyme A carboxylase carboxyl transferase subunit alpha from Yersinia enterocolitica serotype O:8 / biotype 1B (strain NCTC 13174 / 8081).